The sequence spans 286 residues: Bifunctional protein FolD (286 aa).

NADP(+) contacts are provided by residues 166-168 (GAS) and Ile-232.

The protein belongs to the tetrahydrofolate dehydrogenase/cyclohydrolase family. As to quaternary structure, homodimer.

The enzyme catalyses (6R)-5,10-methylene-5,6,7,8-tetrahydrofolate + NADP(+) = (6R)-5,10-methenyltetrahydrofolate + NADPH. The catalysed reaction is (6R)-5,10-methenyltetrahydrofolate + H2O = (6R)-10-formyltetrahydrofolate + H(+). Its pathway is one-carbon metabolism; tetrahydrofolate interconversion. In terms of biological role, catalyzes the oxidation of 5,10-methylenetetrahydrofolate to 5,10-methenyltetrahydrofolate and then the hydrolysis of 5,10-methenyltetrahydrofolate to 10-formyltetrahydrofolate. In Blochmanniella pennsylvanica (strain BPEN), this protein is Bifunctional protein FolD.